Reading from the N-terminus, the 344-residue chain is tRNA N6-adenosine threonylcarbamoyltransferase (344 aa).

H111 and H115 together coordinate Fe cation. Residues 134–138 (LVSGG), D167, G180, D184, and N277 contribute to the substrate site. Residue D305 coordinates Fe cation.

It belongs to the KAE1 / TsaD family. The cofactor is Fe(2+).

Its subcellular location is the cytoplasm. It carries out the reaction L-threonylcarbamoyladenylate + adenosine(37) in tRNA = N(6)-L-threonylcarbamoyladenosine(37) in tRNA + AMP + H(+). Its function is as follows. Required for the formation of a threonylcarbamoyl group on adenosine at position 37 (t(6)A37) in tRNAs that read codons beginning with adenine. Is involved in the transfer of the threonylcarbamoyl moiety of threonylcarbamoyl-AMP (TC-AMP) to the N6 group of A37, together with TsaE and TsaB. TsaD likely plays a direct catalytic role in this reaction. The protein is tRNA N6-adenosine threonylcarbamoyltransferase of Microcystis aeruginosa (strain NIES-843 / IAM M-2473).